The chain runs to 510 residues: Kynurenine 3-monooxygenase (510 aa).

It belongs to the aromatic-ring hydroxylase family. KMO subfamily. The cofactor is FAD.

The protein resides in the mitochondrion outer membrane. It carries out the reaction L-kynurenine + NADPH + O2 + H(+) = 3-hydroxy-L-kynurenine + NADP(+) + H2O. The protein operates within cofactor biosynthesis; NAD(+) biosynthesis; quinolinate from L-kynurenine: step 1/3. Catalyzes the hydroxylation of L-kynurenine (L-Kyn) to form 3-hydroxy-L-kynurenine (L-3OHKyn). Required for synthesis of quinolinic acid. This chain is Kynurenine 3-monooxygenase (bna4), found in Aspergillus oryzae (strain ATCC 42149 / RIB 40) (Yellow koji mold).